The sequence spans 286 residues: Protein MGF 360-3L (286 aa).

The helical transmembrane segment at 1–17 (MKVLLELLLGYSVLILA) threads the bilayer. Residue N61 is glycosylated (N-linked (GlcNAc...) asparagine; by host). The next 2 helical transmembrane spans lie at 128-148 (HCCF…FVYN) and 153-173 (LNTT…SQPA). N-linked (GlcNAc...) asparagine; by host glycosylation is found at N238 and N263.

The protein belongs to the asfivirus MGF 110 family.

The protein resides in the host membrane. Its function is as follows. Plays a role in virus cell tropism, and may be required for efficient virus replication in macrophages. This is Protein MGF 360-3L from African swine fever virus (isolate Tick/Malawi/Lil 20-1/1983) (ASFV).